Here is a 562-residue protein sequence, read N- to C-terminus: Protein FAM222B (562 aa).

2 stretches are compositionally biased toward low complexity: residues 155-167 and 183-201; these read QQALQHAQTLAHA and ALSHPQSLQQPQGLGHPQP. 3 disordered regions span residues 155–203, 219–245, and 537–562; these read QQAL…QPMA, LQHPHNPLLHGGRKMPDSDAPPNVTVS, and AHRAPGNRAPDPTESRSLHIQHPGYR.

It belongs to the FAM222 family.

This chain is Protein FAM222B (FAM222B), found in Homo sapiens (Human).